The following is a 107-amino-acid chain: UPF0060 membrane protein ZMO1566 (107 aa).

The next 4 helical transmembrane spans lie at 4-24, 29-49, 55-75, and 84-104; these read LLYIPAALAEITGCFSFWAWI, SPLWLLPGIASLLLFAWLLTF, AGKAYAVYGGIYIIMSLLWSW, and HWDLIGAAFCLVGAAIILWMP.

This sequence belongs to the UPF0060 family.

It localises to the cell inner membrane. In Zymomonas mobilis subsp. mobilis (strain ATCC 31821 / ZM4 / CP4), this protein is UPF0060 membrane protein ZMO1566.